The sequence spans 453 residues: DDB1- and CUL4-associated factor 12 (453 aa).

Residues 1–12 (MARKAVSRKRKA) are compositionally biased toward basic residues. The disordered stretch occupies residues 1-34 (MARKAVSRKRKASASPGAGSDAQGPQFGWDHSLH). The required for nuclear location and interaction with MOV10 stretch occupies residues 1 to 38 (MARKAVSRKRKASASPGAGSDAQGPQFGWDHSLHKRKR). Residue Ser-15 is modified to Phosphoserine. 4 WD repeats span residues 138–178 (QQGC…PVCV), 182–220 (GHKD…LTKS), 250–289 (PDNC…SKLL), and 338–375 (ERGS…FLEE).

This sequence belongs to the WD repeat DCAF12 family. In terms of assembly, component of the DCX(DCAF12) E3 ubiquitin ligase complex, at least composed of CUL4 (CUL4A or CUL4B), DDB1, DCAF12 and RBX1.

The protein resides in the cytoplasm. Its subcellular location is the cytoskeleton. It localises to the microtubule organizing center. It is found in the centrosome. The protein localises to the nucleus. It functions in the pathway protein modification; protein ubiquitination. Functionally, substrate-recognition component of a DCX (DDB1-CUL4-X-box) E3 ubiquitin-protein ligase complex of the DesCEND (destruction via C-end degrons) pathway, which recognizes a C-degron located at the extreme C terminus of target proteins, leading to their ubiquitination and degradation. The C-degron recognized by the DesCEND pathway is usually a motif of less than ten residues and can be present in full-length proteins, truncated proteins or proteolytically cleaved forms. The DCX(DCAF12) complex specifically recognizes proteins with a diglutamate (Glu-Glu) at the C-terminus, such as MAGEA3, MAGEA6 and CCT5, leading to their ubiquitination and degradation. Ubiquitination of MAGEA3, MAGEA6 by DCX(DCAF12) complex is required for starvation-induced autophagy. Also directly recognizes the C-terminal glutamate-leucine (Glu-Leu) degron as an alternative degron in proteins such as MOV10, leading to their ubiquitination and degradation. Controls the protein level of MOV10 during spermatogenesis and in T cells, especially after their activation. The sequence is that of DDB1- and CUL4-associated factor 12 from Mus musculus (Mouse).